The chain runs to 596 residues: Probable translation initiation factor IF-2 (596 aa).

Residues 3–220 (IRSPIVSVLG…MLLGLAQEYL (218 aa)) enclose the tr-type G domain. The segment at 12 to 19 (GHVDHGKT) is G1. GTP is bound at residue 12–19 (GHVDHGKT). The G2 stretch occupies residues 37-41 (GITQH). A G3 region spans residues 76–79 (DTPG). GTP contacts are provided by residues 76 to 80 (DTPGH) and 130 to 133 (NKID). Residues 130–133 (NKID) are G4. A G5 region spans residues 198–200 (SAK).

This sequence belongs to the TRAFAC class translation factor GTPase superfamily. Classic translation factor GTPase family. IF-2 subfamily.

In terms of biological role, function in general translation initiation by promoting the binding of the formylmethionine-tRNA to ribosomes. Seems to function along with eIF-2. The polypeptide is Probable translation initiation factor IF-2 (Methanobrevibacter smithii (strain ATCC 35061 / DSM 861 / OCM 144 / PS)).